The chain runs to 213 residues: Guanylate kinase (213 aa).

Residues 10–189 (GLLLMVVAPS…AYADLAHIYH (180 aa)) enclose the Guanylate kinase-like domain. ATP is bound at residue 17-24 (APSGVGKT).

This sequence belongs to the guanylate kinase family.

The protein localises to the cytoplasm. The catalysed reaction is GMP + ATP = GDP + ADP. In terms of biological role, essential for recycling GMP and indirectly, cGMP. This chain is Guanylate kinase (gmk), found in Caulobacter vibrioides (strain ATCC 19089 / CIP 103742 / CB 15) (Caulobacter crescentus).